Here is a 69-residue protein sequence, read N- to C-terminus: Small integral membrane protein 20 (69 aa).

The Mitochondrial matrix segment spans residues 1–8; the sequence is MAAARNLR. A helical membrane pass occupies residues 9–29; the sequence is TALIFGGFISMVGAAFYPIYF. Over 30–69 the chain is Mitochondrial intermembrane; it reads RPLLRLEEYQKEQAVNRAGIVQEDVQPPGLKVWSDPFGRK. Phe-66 bears the Phenylalanine amide mark.

In terms of assembly, component of the MITRAC (mitochondrial translation regulation assembly intermediate of cytochrome c oxidase complex) complex, the core components of this complex being Coa3/Mitrac12 and Cox14. Interacts with Coa3/Mitrac12 and Cox4i1. Directly interacts with newly synthesized Mt-Co1/Cox1. In terms of tissue distribution, highly expressed in the hypothalamus, substantia nigra reticulata, Edinger-Westphal nucleus, and nucleus of the solitary tract/dorsal motor nucleus of the vagus, the spinal cord, and sensory ganglia (at protein level). Also expressed in the heart, thymus, esophagus, stomach, spleen, lung, pituitary gland, kidney, jejunum, duodenum, ileum, cerebrum, pons, and colon (at protein level). Expressed in preadipocytes and apidocytes (at protein level). Expressed in pancreatic islet cells (at protein level).

It localises to the mitochondrion inner membrane. Its subcellular location is the secreted. Its function is as follows. Component of the MITRAC (mitochondrial translation regulation assembly intermediate of cytochrome c oxidase complex) complex, that regulates cytochrome c oxidase assembly. Promotes the progression of complex assembly after the association of Mt-Co1/Cox11 with Cox4I1 and Cox6c. Chaperone-like assembly factor required to stabilize newly synthesized Mt-Co1/Cox1 and to prevent its premature turnover. Peptide involved in a broad spectrum of regulatory functions. Is a ligand for GPR173. As part of the reproductive cycle, it regulates gonadotropin-releasing hormone (GnRH) signaling in the hypothalamus and pituitary gland which augments the release of luteinizing hormone. More specifically, it regulates the expression of transcription factors CEBPB and POU2F1/OCT1 through the cAMP-PKA signaling pathway, which subsequently regulate the expression of GNRHR and KISS1. Plays a protective role in memory retention through activation of GNRHR. Regulates the secretion of AVP by hypothalamic neurons. Plays a role in the transduction of the itch sensation. Induces anxiolytic effects, reducing behavior associated with anxiety. Regulates food intake as well as satiation and satiety by increasing NUCB2 expression in neurons. In the ovary, it regulates follicular growth by stimulating granulosa cell proliferation by increasing the expression of GPR173, CREB1, CYP19A1, KITLG, FSHR, and LHCGR. It also increases the production of estradiol (E2). In the heart, it regulates contractility and relaxation by activating the AKT1-NOS3 and MAPK1-MAPK3 signaling pathways. It also plays a cardioprotective role during ischemia, where it activates the SAFE and RISK pathways. Stimulates the proliferation and differentiation of preadipocytes. In pancreatic islet cells, it induces proliferation of islet cells as well as the production of INS1 and INS2 through activation of the MAPK1-MAPK3 signaling pathways. The chain is Small integral membrane protein 20 from Rattus norvegicus (Rat).